A 477-amino-acid chain; its full sequence is RNA pseudouridine synthase 4, mitochondrial (477 aa).

The transit peptide at 1–43 (MAKWRLATATLRRQLQSSSPTISTFKNPTKALSAAAHQSTRSY) directs the protein to the mitochondrion. The disordered stretch occupies residues 34–55 (AAAHQSTRSYSTTQTDDSRGKW). The segment covering 36-48 (AHQSTRSYSTTQT) has biased composition (polar residues). Residues 90–175 (TTALRWILRC…AKKESFQCSD (86 aa)) form the S4 RNA-binding domain. Residue aspartate 236 is part of the active site.

It belongs to the pseudouridine synthase RluA family.

Its subcellular location is the mitochondrion. The catalysed reaction is a uridine in RNA = a pseudouridine in RNA. The protein is RNA pseudouridine synthase 4, mitochondrial of Arabidopsis thaliana (Mouse-ear cress).